Reading from the N-terminus, the 60-residue chain is Large ribosomal subunit protein bL32 (60 aa).

The protein belongs to the bacterial ribosomal protein bL32 family.

The protein is Large ribosomal subunit protein bL32 of Pseudothermotoga lettingae (strain ATCC BAA-301 / DSM 14385 / NBRC 107922 / TMO) (Thermotoga lettingae).